The primary structure comprises 577 residues: MALNGPGVYHRTREHEQKDASDITKNILAESWKSWPNEAAFDRLEEHRGPLRLTLKGTIPSWAGGSLYRTGPGQSRVEDTARGTHFTTHWFDGFAQTHRFDIIPSEDGETQVWYSSRRQADEWIADVKKKGWRSGMTFGQKADPCVGIFAKVMTLFEPKLGNHNVALLANVPGVPKDEKTEVLNGVTGPLGHRVNTSNLFVSTDYTGIRRIDPSTLQPLAETTQYDLHPSLSGPCSCSHAQRDPDSGDLFNFNLAFGRVPTYRIFRVDAASGETEVLATISDLNVPPAYMHSFFLTENHVVICIPASHYAWRGLKTQWEGNIIDSMKPFDKERKCKWLVVDRRHGKGLVATFSTPAAFFFHSINAFEKNIEDEDGTEQTDLFFDLAKYNNMDIIKGFYYDVLMDRDDATKKYWFKNDRYKNCAPTLTRYRFRLPSAPTPDTTFSASAEQVLAIPSPHAGELPTIHPLRNGKPYRYVYSASLRGLTTSVDALVKTDLDTSEAFIWTGPEGHTPGEPVFVPRPGAEAEDDGIVFSLVVDGVNEKAYILCLNGKTMEELGRAEADFAIGQGFHGIHLPAA.

His-239, His-291, His-361, and His-570 together coordinate Fe(2+).

This sequence belongs to the carotenoid oxygenase family. Fe(2+) serves as cofactor.

It localises to the cytoplasm. The protein resides in the cytosol. The catalysed reaction is torulene + O2 = 4'-apo-beta-carotenal + 3-methyl-2-butenal. Its pathway is carotenoid biosynthesis. Its function is as follows. Torulene dioxygenase; part of the pathway that mediates the biosynthesis of neurosporaxanthin, a carboxylic apocarotenoid acting as an essential protective pigments and leading to orange pigmentation. CarT mediates the cleavage of torulene into beta-apo-4'-carotenal, the aldehyde corresponding to the acidic neurosporaxanthin. Is also active on other monocyclic synthetic substrates such as beta-apo-8'-carotenal and beta-apo-10'-carotenal to produce beta-apo-14'-carotenal and retinal(beta-apo-15'-carotenal), respectively. Neurosporaxanthin is synthesized from geranyl-geranyl pyrophosphate (GGPP) through several enzymatic activities. Phytoene synthase activity performed by the bifunctional enzyme carAR first produces phytoene from geranyl-geranyl pyrophosphate (GGPP). The phytoene dehydrogenase carB then introduces 4 desaturations to lead to lycopene which is substrate of the carotene cyclase activity of carAR that leads to the production of gamma-carotene. CarB then performs a 5th desaturation reaction to yield torulene. Torulene is the substrate of the dioxidase carT that breaks the molecule, removing five carbon atoms to yield beta-apo-4'-carotenal, whereas the aldehyde dehydrogenase carD mediates the last step by converting beta-apo-4'-carotenal into neurosporaxanthin. This is Torulene dioxygenase from Fusarium fujikuroi (Bakanae and foot rot disease fungus).